The chain runs to 546 residues: Chaperonin GroEL (546 aa).

ATP contacts are provided by residues 30–33, Lys-51, 87–91, Gly-415, 479–481, and Asp-495; these read TLGP, DGTTT, and NAA. The segment at 526-546 is disordered; sequence KKDEPAMPAGGGMGGMGGMDF. The span at 534 to 546 shows a compositional bias: gly residues; the sequence is AGGGMGGMGGMDF.

This sequence belongs to the chaperonin (HSP60) family. As to quaternary structure, forms a cylinder of 14 subunits composed of two heptameric rings stacked back-to-back. Interacts with the co-chaperonin GroES.

It is found in the cytoplasm. The enzyme catalyses ATP + H2O + a folded polypeptide = ADP + phosphate + an unfolded polypeptide.. Its function is as follows. Together with its co-chaperonin GroES, plays an essential role in assisting protein folding. The GroEL-GroES system forms a nano-cage that allows encapsulation of the non-native substrate proteins and provides a physical environment optimized to promote and accelerate protein folding. The chain is Chaperonin GroEL from Xanthomonas campestris pv. campestris (strain 8004).